A 443-amino-acid chain; its full sequence is Gasdermin-A2 (443 aa).

The segment at Met-1–Gly-249 is triggers pyroptosis. Residue Arg-9–Arg-13 coordinates a cardiolipin. 4 beta stranded membrane passes run Asn-78–Val-95, Met-99–Val-120, Val-164–Asn-179, and Leu-183–Ile-197. Residues Gly-249–Thr-312 are a coiled coil.

This sequence belongs to the gasdermin family. As to quaternary structure, homooligomer; homooligomeric ring-shaped pore complex containing 18-36 subunits when inserted in the membrane. Cleavage relieves autoinhibition by releasing the N-terminal moiety (Gasdermin-A2, N-terminal) that initiates pyroptosis. In contrast to Gsdma, not cleaved by bacterial effector protein SpeB. Post-translationally, palmitoylated. Expressed in the gastrointestinal tract, specifically from the middle to the upper region of the gastric mucosa in the glandular stomach.

The protein resides in the cytoplasm. It is found in the perinuclear region. The protein localises to the cytosol. Its subcellular location is the cell membrane. Its activity is regulated as follows. The full-length protein before cleavage is inactive: intramolecular interactions between N- and C-terminal domains mediate autoinhibition in the absence of activation signal. The intrinsic pyroptosis-inducing activity is carried by the released N-terminal moiety (Gasdermin-A2, N-terminal). This form constitutes the precursor of the pore-forming protein and acts as a sensor of infection: upon bacterial infection, specifically cleaved by some bacterial effector protein, releasing the N-terminal moiety (Gasdermin-A2, N-terminal) that binds to membranes and forms pores, triggering pyroptosis. Its function is as follows. Pore-forming protein that causes membrane permeabilization and pyroptosis. Released upon cleavage of Gasdermin-A2, and binds to membrane inner leaflet lipids. Homooligomerizes within the membrane and forms pores of 10-15 nanometers (nm) of inner diameter, triggering pyroptosis. Binds to membrane inner leaflet lipids, such as phosphatidylinositol (4,5)-bisphosphate. This Mus musculus (Mouse) protein is Gasdermin-A2.